The sequence spans 270 residues: uncharacterized protein (270 aa).

The first 23 residues, 1-23 (MFNFITFILFAVVCISYCHKSRG), serve as a signal peptide directing secretion. N-linked (GlcNAc...) asparagine glycosylation is found at asparagine 246 and asparagine 252.

The protein resides in the secreted. This is an uncharacterized protein from Caenorhabditis elegans.